Consider the following 119-residue polypeptide: Holo-[acyl-carrier-protein] synthase (119 aa).

Residues Asp8 and Glu58 each coordinate Mg(2+).

The protein belongs to the P-Pant transferase superfamily. AcpS family. The cofactor is Mg(2+).

It localises to the cytoplasm. It catalyses the reaction apo-[ACP] + CoA = holo-[ACP] + adenosine 3',5'-bisphosphate + H(+). Functionally, transfers the 4'-phosphopantetheine moiety from coenzyme A to a Ser of acyl-carrier-protein. This chain is Holo-[acyl-carrier-protein] synthase, found in Geobacillus sp. (strain WCH70).